Reading from the N-terminus, the 115-residue chain is MFRIMQKSKIHRATVTDKNLNYEGSITIDYRLMKLADIRENELVQVVNINNGERFETYVIKGEEGSGVIALNGAAARLAEIGDRVIIISYAIYNDDEYKPPKIVKVTEKNEPIEK.

Ser25 serves as the catalytic Schiff-base intermediate with substrate; via pyruvic acid. Ser25 is subject to Pyruvic acid (Ser). Substrate is bound at residue Thr57. Tyr58 (proton donor) is an active-site residue. Residue 73-75 (GAA) participates in substrate binding.

Belongs to the PanD family. In terms of assembly, heterooctamer of four alpha and four beta subunits. The cofactor is pyruvate. Post-translationally, is synthesized initially as an inactive proenzyme, which is activated by self-cleavage at a specific serine bond to produce a beta-subunit with a hydroxyl group at its C-terminus and an alpha-subunit with a pyruvoyl group at its N-terminus.

It is found in the cytoplasm. It carries out the reaction L-aspartate + H(+) = beta-alanine + CO2. Its pathway is cofactor biosynthesis; (R)-pantothenate biosynthesis; beta-alanine from L-aspartate: step 1/1. Its function is as follows. Catalyzes the pyruvoyl-dependent decarboxylation of aspartate to produce beta-alanine. The chain is Aspartate 1-decarboxylase from Kosmotoga olearia (strain ATCC BAA-1733 / DSM 21960 / TBF 19.5.1).